The chain runs to 826 residues: Ribonucleoside-diphosphate reductase large subunit (826 aa).

Substrate is bound by residues T171, S186–C187, G217, N387–E391, and P594–C598. An intrachain disulfide couples C187 to C403. N387 (proton acceptor) is an active-site residue. C389 (cysteine radical intermediate) is an active-site residue. The active-site Proton acceptor is the E391. Residues S747–P769 are disordered. Residues P749 to P758 are compositionally biased toward basic and acidic residues.

It belongs to the ribonucleoside diphosphate reductase large chain family. In terms of assembly, heterotetramer composed of a homodimer of the large subunit (R1) and a homodimer of the small subunit (R2). Larger multisubunit protein complex are also active, composed of (R1)n(R2)n.

It carries out the reaction a 2'-deoxyribonucleoside 5'-diphosphate + [thioredoxin]-disulfide + H2O = a ribonucleoside 5'-diphosphate + [thioredoxin]-dithiol. Functionally, ribonucleoside-diphosphate reductase holoenzyme provides the precursors necessary for viral DNA synthesis. Allows virus growth in non-dividing cells, as well as reactivation from latency in infected hosts. Catalyzes the biosynthesis of deoxyribonucleotides from the corresponding ribonucleotides. The protein is Ribonucleoside-diphosphate reductase large subunit of Homo sapiens (Human).